Here is a 113-residue protein sequence, read N- to C-terminus: Urease subunit beta (113 aa).

Belongs to the urease beta subunit family. As to quaternary structure, heterotrimer of UreA (gamma), UreB (beta) and UreC (alpha) subunits. Three heterotrimers associate to form the active enzyme.

The protein resides in the cytoplasm. The enzyme catalyses urea + 2 H2O + H(+) = hydrogencarbonate + 2 NH4(+). It functions in the pathway nitrogen metabolism; urea degradation; CO(2) and NH(3) from urea (urease route): step 1/1. The chain is Urease subunit beta from Cyanothece sp. (strain PCC 7425 / ATCC 29141).